The primary structure comprises 787 residues: Protein PAT1 homolog 2 (787 aa).

5 disordered regions span residues K94–D120, E134–P221, V338–F374, L411–Q445, and V765–G787. A compositionally biased stretch (polar residues) spans G105–D120. Residues S142–S153 show a composition bias toward low complexity. Composition is skewed to polar residues over residues L154 to S171, S180 to S198, and G208 to P221. Phosphoserine occurs at positions 184 and 192. Basic residues predominate over residues H341–R353. Polar residues-rich tracts occupy residues G355–Q373 and S436–Q445.

Activator of mRNA decapping. Involved in mRNA decay via decapping. This Arabidopsis thaliana (Mouse-ear cress) protein is Protein PAT1 homolog 2.